The following is a 370-amino-acid chain: Uroporphyrinogen decarboxylase (370 aa).

Residues 29–33, aspartate 79, tyrosine 155, serine 210, and histidine 342 contribute to the substrate site; that span reads RQAGR.

The protein belongs to the uroporphyrinogen decarboxylase family. Homodimer.

The protein localises to the cytoplasm. It carries out the reaction uroporphyrinogen III + 4 H(+) = coproporphyrinogen III + 4 CO2. The protein operates within porphyrin-containing compound metabolism; protoporphyrin-IX biosynthesis; coproporphyrinogen-III from 5-aminolevulinate: step 4/4. Catalyzes the decarboxylation of four acetate groups of uroporphyrinogen-III to yield coproporphyrinogen-III. In Verminephrobacter eiseniae (strain EF01-2), this protein is Uroporphyrinogen decarboxylase.